Consider the following 327-residue polypeptide: Probable 6-phosphogluconolactonase 3, chloroplastic (327 aa).

2 stretches are compositionally biased toward low complexity: residues 1–29 and 43–66; these read MSAS…PASR and VASR…PGGA. Positions 1 to 66 are disordered; it reads MSASAAVSST…VYATASPGGA (66 aa). Residues 1–71 constitute a chloroplast transit peptide; the sequence is MSASAAVSST…SPGGAGGTTA (71 aa).

This sequence belongs to the glucosamine/galactosamine-6-phosphate isomerase family. 6-phosphogluconolactonase subfamily.

It localises to the plastid. Its subcellular location is the chloroplast. It catalyses the reaction 6-phospho-D-glucono-1,5-lactone + H2O = 6-phospho-D-gluconate + H(+). It participates in carbohydrate degradation; pentose phosphate pathway; D-ribulose 5-phosphate from D-glucose 6-phosphate (oxidative stage): step 2/3. Hydrolysis of 6-phosphogluconolactone to 6-phosphogluconate. The sequence is that of Probable 6-phosphogluconolactonase 3, chloroplastic from Oryza sativa subsp. indica (Rice).